The primary structure comprises 853 residues: Probable inorganic carbon transporter subunit DabA (853 aa).

The interval 1-21 is disordered; that stretch reads MSHANSEETMMNTAVAHPSTS. The span at 7-21 shows a compositional bias: polar residues; it reads EETMMNTAVAHPSTS. Residues cysteine 364, aspartate 366, histidine 546, and cysteine 561 each contribute to the Zn(2+) site.

It belongs to the inorganic carbon transporter (TC 9.A.2) DabA family. As to quaternary structure, forms a complex with DabB. The cofactor is Zn(2+).

It is found in the cell inner membrane. In terms of biological role, part of an energy-coupled inorganic carbon pump. In Methylovorus glucosotrophus (strain SIP3-4), this protein is Probable inorganic carbon transporter subunit DabA.